The sequence spans 303 residues: Aspartate carbamoyltransferase catalytic subunit (303 aa).

Carbamoyl phosphate is bound by residues R54 and T55. K83 is a binding site for L-aspartate. Residues R104, H132, and Q135 each contribute to the carbamoyl phosphate site. The L-aspartate site is built by R164 and R226. Carbamoyl phosphate contacts are provided by L265 and P266.

It belongs to the aspartate/ornithine carbamoyltransferase superfamily. ATCase family. As to quaternary structure, heterooligomer of catalytic and regulatory chains.

It catalyses the reaction carbamoyl phosphate + L-aspartate = N-carbamoyl-L-aspartate + phosphate + H(+). It participates in pyrimidine metabolism; UMP biosynthesis via de novo pathway; (S)-dihydroorotate from bicarbonate: step 2/3. Its function is as follows. Catalyzes the condensation of carbamoyl phosphate and aspartate to form carbamoyl aspartate and inorganic phosphate, the committed step in the de novo pyrimidine nucleotide biosynthesis pathway. This chain is Aspartate carbamoyltransferase catalytic subunit, found in Methanocorpusculum labreanum (strain ATCC 43576 / DSM 4855 / Z).